The primary structure comprises 122 residues: Large ribosomal subunit protein uL14 (122 aa).

This sequence belongs to the universal ribosomal protein uL14 family. In terms of assembly, part of the 50S ribosomal subunit. Forms a cluster with proteins L3 and L19. In the 70S ribosome, L14 and L19 interact and together make contacts with the 16S rRNA in bridges B5 and B8.

In terms of biological role, binds to 23S rRNA. Forms part of two intersubunit bridges in the 70S ribosome. The protein is Large ribosomal subunit protein uL14 of Syntrophobacter fumaroxidans (strain DSM 10017 / MPOB).